Reading from the N-terminus, the 669-residue chain is Protein ENTREP3 (669 aa).

3 consecutive transmembrane segments (helical) span residues 34 to 54, 67 to 87, and 91 to 111; these read LLTL…FSMV, SCPS…IVSW, and FTLV…LSMA. The N-linked (GlcNAc...) asparagine glycan is linked to Asn-160. A helical transmembrane segment spans residues 174 to 194; that stretch reads LFSVCGLTICAAIICTLSAIV. Phosphoserine is present on residues Ser-359 and Ser-390. Disordered stretches follow at residues 387-420, 445-502, and 550-571; these read FEDS…PTAA, PRGG…TTSS, and RSAE…SGPT. Residues 399 to 408 are compositionally biased toward low complexity; that stretch reads AARSYSCSAP. Ser-494 is modified (phosphoserine). Residue Ser-575 is modified to Phosphoserine. The segment at 597–624 is disordered; sequence RRSPDPTGTGAHGYKQVRRSPWGRPGRE.

It belongs to the ENTREP family. As to quaternary structure, may interact with WWOX.

It localises to the membrane. The protein is Protein ENTREP3 of Mus musculus (Mouse).